Consider the following 134-residue polypeptide: Profilin (134 aa).

This sequence belongs to the profilin family. As to quaternary structure, interacts with host Tpm1. Interacts with protein A25.

It is found in the host cytoplasm. Participates in either intracellular transport of viral proteins or intercellular spread of the virus. Cellular profilins modulate actin filament dynamics (polymerization and depolymerization) via direct binding to actin through an actin-binding domain as well as by modulation of other actin-binding proteins. In contrast to cellular homologs, the poxvirus profilins seem to bind actin only weakly. The chain is Profilin from Ectromelia virus (strain Moscow) (ECTV).